The sequence spans 180 residues: Segregation and condensation protein B (180 aa).

This sequence belongs to the ScpB family. Homodimer. Homodimerization may be required to stabilize the binding of ScpA to the Smc head domains. Component of a cohesin-like complex composed of ScpA, ScpB and the Smc homodimer, in which ScpA and ScpB bind to the head domain of Smc. The presence of the three proteins is required for the association of the complex with DNA.

Its subcellular location is the cytoplasm. Participates in chromosomal partition during cell division. May act via the formation of a condensin-like complex containing Smc and ScpA that pull DNA away from mid-cell into both cell halves. The protein is Segregation and condensation protein B of Staphylococcus aureus (strain USA300).